A 169-amino-acid polypeptide reads, in one-letter code: Sec-independent protein translocase protein TatB (169 aa).

The helical transmembrane segment at 2 to 22 (SPGIGMPELLVVLVLALVVVG) threads the bilayer. The disordered stretch occupies residues 106-169 (NQAETDADKA…AKPVDEIKGR (64 aa)).

Belongs to the TatB family. The Tat system comprises two distinct complexes: a TatABC complex, containing multiple copies of TatA, TatB and TatC subunits, and a separate TatA complex, containing only TatA subunits. Substrates initially bind to the TatABC complex, which probably triggers association of the separate TatA complex to form the active translocon.

The protein resides in the cell inner membrane. In terms of biological role, part of the twin-arginine translocation (Tat) system that transports large folded proteins containing a characteristic twin-arginine motif in their signal peptide across membranes. Together with TatC, TatB is part of a receptor directly interacting with Tat signal peptides. TatB may form an oligomeric binding site that transiently accommodates folded Tat precursor proteins before their translocation. This Maricaulis maris (strain MCS10) (Caulobacter maris) protein is Sec-independent protein translocase protein TatB.